The following is a 487-amino-acid chain: GTPase Der (487 aa).

2 consecutive EngA-type G domains span residues 3-167 and 203-378; these read LTLA…DEME and LQVA…EVWN. GTP contacts are provided by residues 9–16, 56–60, and 119–122; these read GRPNVGKS, DTAGL, and NKAE. Residues 167–190 show a composition bias toward acidic residues; the sequence is EQQAEEQAPETDVDLDPEDEDGEE. The tract at residues 167–191 is disordered; sequence EQQAEEQAPETDVDLDPEDEDGEEV. GTP-binding positions include 209 to 216, 256 to 260, and 321 to 324; these read GRPNAGKS, DTAGM, and NKWD. A KH-like domain is found at 379–465; it reads RRIPTAALNR…RLTLRGQGDK (87 aa). The disordered stretch occupies residues 458-487; sequence TLRGQGDKNPYKGRRKKNAGALAKHLKSRG. Over residues 468-487 the composition is skewed to basic residues; that stretch reads YKGRRKKNAGALAKHLKSRG.

It belongs to the TRAFAC class TrmE-Era-EngA-EngB-Septin-like GTPase superfamily. EngA (Der) GTPase family. Associates with the 50S ribosomal subunit.

Functionally, GTPase that plays an essential role in the late steps of ribosome biogenesis. This is GTPase Der from Ruegeria pomeroyi (strain ATCC 700808 / DSM 15171 / DSS-3) (Silicibacter pomeroyi).